We begin with the raw amino-acid sequence, 431 residues long: O-phosphoseryl-tRNA(Sec) selenium transferase (431 aa).

The tract at residues 1–36 (MRGLIPDHMLERGRTVLDSYREPVERLLSERRMPEE) is tetramerization. R67 serves as a coordination point for pyridoxal 5'-phosphate. Residues 88-98 (GRSGTLVDPQP) are phosphate loop (P-loop). Substrate is bound by residues R89, S90, and Q97. The residue at position 269 (K269) is an N6-(pyridoxal phosphate)lysine. Residue R298 participates in substrate binding.

It belongs to the SepSecS family. In terms of assembly, homotetramer. Pyridoxal 5'-phosphate serves as cofactor.

It carries out the reaction O-phospho-L-seryl-tRNA(Sec) + selenophosphate + H2O = L-selenocysteinyl-tRNA(Sec) + 2 phosphate. Its pathway is aminoacyl-tRNA biosynthesis; selenocysteinyl-tRNA(Sec) biosynthesis; selenocysteinyl-tRNA(Sec) from L-seryl-tRNA(Sec) (archaeal/eukaryal route): step 2/2. Converts O-phosphoseryl-tRNA(Sec) to selenocysteinyl-tRNA(Sec) required for selenoprotein biosynthesis. The polypeptide is O-phosphoseryl-tRNA(Sec) selenium transferase (spcS) (Methanopyrus kandleri (strain AV19 / DSM 6324 / JCM 9639 / NBRC 100938)).